Consider the following 65-residue polypeptide: Defensin Cg-Defm (65 aa).

An N-terminal signal peptide occupies residues 1 to 22; the sequence is MKVFVLLTLAVLLMVSADMAFA. Beta-D-GlcNAc-(1-&gt;4)-Mur2Ac(oyl-L-Ala-gamma-D-Glu-L-Lys-D-Ala-D-Ala)-di-trans,octa-cis-undecaprenyl diphosphate-binding residues include phenylalanine 24, glycine 25, and cysteine 26. 4 cysteine pairs are disulfide-bonded: cysteine 26–cysteine 47, cysteine 33–cysteine 56, cysteine 37–cysteine 58, and cysteine 42–cysteine 61. The tract at residues 27-30 is binds to membrane interface; the sequence is PGNQ. Histidine 36 provides a ligand contact to beta-D-GlcNAc-(1-&gt;4)-Mur2Ac(oyl-L-Ala-gamma-D-Glu-L-Lys-D-Ala-D-Ala)-di-trans,octa-cis-undecaprenyl diphosphate. The interval 48–54 is binds to membrane interface; that stretch reads DAATLWL. A beta-D-GlcNAc-(1-&gt;4)-Mur2Ac(oyl-L-Ala-gamma-D-Glu-L-Lys-D-Ala-D-Ala)-di-trans,octa-cis-undecaprenyl diphosphate-binding site is contributed by cysteine 56.

The protein belongs to the invertebrate defensin family. As to expression, expressed in the mantle. Low or no expression in most of the organs analyzed, including hemocytes, heart, digestive gland, and gills.

The protein resides in the secreted. It localises to the target cell membrane. Antibacterial peptide mostly active against Gram-positive bacteria (M.lysodeikticus, S.aureus, and the marine bacteria, B.stationis, and M.maritypicum). It acts by selectively inhibiting peptidoglycan biosynthesis through complex formation with the cell wall precursor lipid II (1:1 molar ratio) thus inhibiting cell wall synthesis. It does not disrupt cell membranes. Is noticeably more potent than Cg-Defh1. It shows no or limited activities against Gram-negative bacteria and filamentous fungi. The chain is Defensin Cg-Defm from Magallana gigas (Pacific oyster).